Here is a 184-residue protein sequence, read N- to C-terminus: MRTIDKRIAPNVRLAATLDTGEDVALVLPRGTVLRDGDVLVADDGALVRVAAAHEAVLLVRAPDALTLTRAAYHLGNRHTPVEVGAGCLKLEYDPALADMLTRLGATVERASAPFQPEAGAYGGGHRHGHDATFAEDYALAQQVFDEHHGHSHSHSHSHDHDHDHDHDHQHGPSCSHGHHHGHR.

The disordered stretch occupies residues glutamate 147–arginine 184. The segment covering histidine 157–histidine 171 has biased composition (basic and acidic residues).

Belongs to the UreE family.

It is found in the cytoplasm. Functionally, involved in urease metallocenter assembly. Binds nickel. Probably functions as a nickel donor during metallocenter assembly. The protein is Urease accessory protein UreE of Burkholderia mallei (strain ATCC 23344).